The chain runs to 152 residues: Superoxide dismutase [Cu-Zn] (152 aa).

The Cu cation site is built by His-45, His-47, and His-62. Cys-56 and Cys-145 are disulfide-bonded. Zn(2+)-binding residues include His-62, His-70, His-79, and Asp-82. His-119 is a binding site for Cu cation.

The protein belongs to the Cu-Zn superoxide dismutase family. As to quaternary structure, homodimer. The cofactor is Cu cation. Zn(2+) serves as cofactor.

It localises to the cytoplasm. It carries out the reaction 2 superoxide + 2 H(+) = H2O2 + O2. In terms of biological role, destroys radicals which are normally produced within the cells and which are toxic to biological systems. The chain is Superoxide dismutase [Cu-Zn] (SODCC) from Paulownia kawakamii (Dragon tree).